The following is a 475-amino-acid chain: Lactate utilization protein B (475 aa).

4Fe-4S ferredoxin-type domains follow at residues G304 to Y334 and Y353 to L382. [4Fe-4S] cluster contacts are provided by C313, C316, C319, C323, C366, C369, and C373.

The protein belongs to the LutB/YkgF family.

Functionally, is involved in L-lactate degradation and allows cells to grow with lactate as the sole carbon source. Has probably a role as an electron transporter during oxidation of L-lactate. This Geobacillus sp. (strain WCH70) protein is Lactate utilization protein B.